The following is a 398-amino-acid chain: Enoyl-[acyl-carrier-protein] reductase [NADH] (398 aa).

NAD(+) contacts are provided by residues Gly-48–Tyr-53, Phe-74–Glu-75, Asp-111–Ala-112, and Leu-139–Ala-140. Residue Tyr-225 coordinates substrate. Residue Tyr-235 is the Proton donor of the active site. NAD(+) is bound by residues Lys-244 and Val-273–Thr-275.

This sequence belongs to the TER reductase family. In terms of assembly, monomer.

It catalyses the reaction a 2,3-saturated acyl-[ACP] + NAD(+) = a (2E)-enoyl-[ACP] + NADH + H(+). It participates in lipid metabolism; fatty acid biosynthesis. In terms of biological role, involved in the final reduction of the elongation cycle of fatty acid synthesis (FAS II). Catalyzes the reduction of a carbon-carbon double bond in an enoyl moiety that is covalently linked to an acyl carrier protein (ACP). The sequence is that of Enoyl-[acyl-carrier-protein] reductase [NADH] from Paraburkholderia phytofirmans (strain DSM 17436 / LMG 22146 / PsJN) (Burkholderia phytofirmans).